We begin with the raw amino-acid sequence, 103 residues long: Phosphoribosyl-ATP pyrophosphatase (103 aa).

The protein belongs to the PRA-PH family.

The protein resides in the cytoplasm. It carries out the reaction 1-(5-phospho-beta-D-ribosyl)-ATP + H2O = 1-(5-phospho-beta-D-ribosyl)-5'-AMP + diphosphate + H(+). The protein operates within amino-acid biosynthesis; L-histidine biosynthesis; L-histidine from 5-phospho-alpha-D-ribose 1-diphosphate: step 2/9. The polypeptide is Phosphoribosyl-ATP pyrophosphatase (Cereibacter sphaeroides (strain KD131 / KCTC 12085) (Rhodobacter sphaeroides)).